The following is a 1455-amino-acid chain: DNA polymerase II large subunit (1455 aa).

Positions 1409-1440 (GLLENLSNGSKKTEKAEKAEKPRKKSDEKPKK) are disordered. A compositionally biased stretch (basic and acidic residues) spans 1419-1438 (KKTEKAEKAEKPRKKSDEKP).

It belongs to the archaeal DNA polymerase II family. As to quaternary structure, heterodimer of a large subunit and a small subunit. This protein undergoes a protein self splicing that involves a post-translational excision of the intervening region (intein) followed by peptide ligation.

The catalysed reaction is DNA(n) + a 2'-deoxyribonucleoside 5'-triphosphate = DNA(n+1) + diphosphate. It catalyses the reaction Exonucleolytic cleavage in the 3'- to 5'-direction to yield nucleoside 5'-phosphates.. Functionally, possesses two activities: a DNA synthesis (polymerase) and an exonucleolytic activity that degrades single-stranded DNA in the 3'- to 5'-direction. Has a template-primer preference which is characteristic of a replicative DNA polymerase. In Pyrococcus abyssi (strain GE5 / Orsay), this protein is DNA polymerase II large subunit (polC).